The chain runs to 652 residues: Set1 complex component ash2 (652 aa).

The interval 1–32 (MLAHGSNDYGVSLKGNKTGSSPSKASSLNWNE) is disordered. The span at 15–32 (GNKTGSSPSKASSLNWNE) shows a compositional bias: polar residues. The PHD-type zinc finger occupies 40-94 (NTYCYCGKDRNLRFPDLQCSVCLNMFHLSCLSPPCTSMMGFSTNYQFVCKHCTED). Zn(2+) is bound by residues cysteine 43, cysteine 45, cysteine 58, cysteine 61, histidine 66, cysteine 69, cysteine 88, and cysteine 91. The disordered stretch occupies residues 234-270 (RLVETETPPPSSSKLKEDYKDSKREMKRSNTPWSNAS). Basic and acidic residues predominate over residues 247–261 (KLKEDYKDSKREMKR). Residues 330–519 (EAAKDLPNVM…KHNRYIDLPY (190 aa)) enclose the B30.2/SPRY domain.

It belongs to the cclA family. Component of the Set1 complex composed of ash2, sdc1, set1, shg1, spp1, swd1, swd2 and swd3. Component of the Lid2 complex composed of ash2, jmj3, lid2, sdc1 and snt2.

The protein resides in the nucleus. Functionally, component of the COMPASS (Set1C) complex that specifically mono-, di- and trimethylates histone H3 to form H3K4me1/2/3, which subsequently plays a role in telomere length maintenance and transcription elongation regulation. Regulates MAPK pathway and sporulation through H3K4 methylation. The protein is Set1 complex component ash2 of Schizosaccharomyces pombe (strain 972 / ATCC 24843) (Fission yeast).